The following is a 239-amino-acid chain: MKRPSGRAADQLRSIRITRNYTKHAEGSVLVEFGDTKVICTVSVESGVPRFLKGQGQGWLTAEYGMLPRATGERNQREASRGKQGGRTLEIQRLIGRSLRAALDMSKLGENTLYVDCDVIQADGGTRTASITGAMVALIDALKVLKKRGSLKGEPLKQMIAAVSVGIYQGEPVLDLDYLEDSAAETDLNVVMTNAGGFIEVQGTAEGAPFQPEEFNAMLALAQKGMNEIFELQKAALVD.

Phosphate is bound by residues R87 and 125–127 (GTR).

The protein belongs to the RNase PH family. Homohexameric ring arranged as a trimer of dimers.

It catalyses the reaction tRNA(n+1) + phosphate = tRNA(n) + a ribonucleoside 5'-diphosphate. In terms of biological role, phosphorolytic 3'-5' exoribonuclease that plays an important role in tRNA 3'-end maturation. Removes nucleotide residues following the 3'-CCA terminus of tRNAs; can also add nucleotides to the ends of RNA molecules by using nucleoside diphosphates as substrates, but this may not be physiologically important. Probably plays a role in initiation of 16S rRNA degradation (leading to ribosome degradation) during starvation. The polypeptide is Ribonuclease PH (Ectopseudomonas mendocina (strain ymp) (Pseudomonas mendocina)).